The sequence spans 234 residues: Probable pectate lyase F (234 aa).

Residues 1–17 (MRSTAAVLSILLPGALA) form the signal peptide. An N-linked (GlcNAc...) asparagine glycan is attached at asparagine 168.

Belongs to the polysaccharide lyase 3 family. The cofactor is Ca(2+).

It is found in the secreted. The catalysed reaction is Eliminative cleavage of (1-&gt;4)-alpha-D-galacturonan to give oligosaccharides with 4-deoxy-alpha-D-galact-4-enuronosyl groups at their non-reducing ends.. Pectinolytic enzyme consist of four classes of enzymes: pectin lyase, polygalacturonase, pectin methylesterase and rhamnogalacturonase. Among pectinolytic enzymes, pectin lyase is the most important in depolymerization of pectin, since it cleaves internal glycosidic bonds of highly methylated pectins. Favors pectate, the anion, over pectin, the methyl ester. The polypeptide is Probable pectate lyase F (plyF) (Aspergillus terreus (strain NIH 2624 / FGSC A1156)).